Consider the following 525-residue polypeptide: Bifunctional purine biosynthesis protein PurH (525 aa).

The region spanning 1 to 149 (MSDPVIKRAL…KNHESVTVIT (149 aa)) is the MGS-like domain.

The protein belongs to the PurH family.

It carries out the reaction (6R)-10-formyltetrahydrofolate + 5-amino-1-(5-phospho-beta-D-ribosyl)imidazole-4-carboxamide = 5-formamido-1-(5-phospho-D-ribosyl)imidazole-4-carboxamide + (6S)-5,6,7,8-tetrahydrofolate. It catalyses the reaction IMP + H2O = 5-formamido-1-(5-phospho-D-ribosyl)imidazole-4-carboxamide. It functions in the pathway purine metabolism; IMP biosynthesis via de novo pathway; 5-formamido-1-(5-phospho-D-ribosyl)imidazole-4-carboxamide from 5-amino-1-(5-phospho-D-ribosyl)imidazole-4-carboxamide (10-formyl THF route): step 1/1. Its pathway is purine metabolism; IMP biosynthesis via de novo pathway; IMP from 5-formamido-1-(5-phospho-D-ribosyl)imidazole-4-carboxamide: step 1/1. This is Bifunctional purine biosynthesis protein PurH from Chlorobium phaeobacteroides (strain BS1).